The sequence spans 92 residues: Small ribosomal subunit protein uS17 (92 aa).

The protein belongs to the universal ribosomal protein uS17 family. As to quaternary structure, part of the 30S ribosomal subunit.

One of the primary rRNA binding proteins, it binds specifically to the 5'-end of 16S ribosomal RNA. This is Small ribosomal subunit protein uS17 from Corynebacterium diphtheriae (strain ATCC 700971 / NCTC 13129 / Biotype gravis).